The following is a 246-amino-acid chain: MQPQSKDPCQELHPLVSTLAASIRSSWQKLPELAPLCTADDLKAIHGELDGETLFIGNELYQCRGFRKIHLEIARLGNGLQILHCVWFPDPQYDLPIFGADIVAGPAGISAAIVDLSPTSGELPDPVFKGLEAIERPAFRQVRDLPGWGTIFSSKVCFIRPDGADEEALFNQVVIDYLEVLSDCASRANPESPTTVSTINRYEGQLNYCLQQKRNDKTRRVLEKAFDPEWADRYIELLLFDNPPTP.

This sequence belongs to the HY2 family.

The catalysed reaction is (2R,3Z)-phycocyanobilin + 4 oxidized [2Fe-2S]-[ferredoxin] = biliverdin IXalpha + 4 reduced [2Fe-2S]-[ferredoxin] + 4 H(+). Catalyzes the four-electron reduction of biliverdin IX-alpha (2-electron reduction at both the A and D rings); the reaction proceeds via an isolatable 2-electron intermediate, 181,182-dihydrobiliverdin. In Synechococcus sp. (strain CC9902), this protein is Phycocyanobilin:ferredoxin oxidoreductase.